Reading from the N-terminus, the 340-residue chain is Methionine import ATP-binding protein MetN 2 (340 aa).

Residues 5-244 (VRFESVTKTF…PQAPASKSFV (240 aa)) enclose the ABC transporter domain. 41–48 (GYSGAGKS) is an ATP binding site.

This sequence belongs to the ABC transporter superfamily. Methionine importer (TC 3.A.1.24) family. As to quaternary structure, the complex is composed of two ATP-binding proteins (MetN), two transmembrane proteins (MetI) and a solute-binding protein (MetQ).

The protein resides in the cell membrane. The enzyme catalyses L-methionine(out) + ATP + H2O = L-methionine(in) + ADP + phosphate + H(+). The catalysed reaction is D-methionine(out) + ATP + H2O = D-methionine(in) + ADP + phosphate + H(+). Part of the ABC transporter complex MetNIQ involved in methionine import. Responsible for energy coupling to the transport system. The protein is Methionine import ATP-binding protein MetN 2 of Rhodococcus jostii (strain RHA1).